The primary structure comprises 24 residues: Large ribosomal subunit protein uL10 (24 aa).

This sequence belongs to the universal ribosomal protein uL10 family. Part of the ribosomal stalk of the 50S ribosomal subunit. The N-terminus interacts with L11 and the large rRNA to form the base of the stalk. The C-terminus forms an elongated spine to which L12 dimers bind in a sequential fashion forming a multimeric L10(L12)X complex.

In terms of biological role, forms part of the ribosomal stalk, playing a central role in the interaction of the ribosome with GTP-bound translation factors. This Enterobacter cloacae protein is Large ribosomal subunit protein uL10 (rplJ).